A 462-amino-acid polypeptide reads, in one-letter code: Asparagine--tRNA ligase (462 aa).

This sequence belongs to the class-II aminoacyl-tRNA synthetase family. In terms of assembly, homodimer.

The protein resides in the cytoplasm. It catalyses the reaction tRNA(Asn) + L-asparagine + ATP = L-asparaginyl-tRNA(Asn) + AMP + diphosphate + H(+). The polypeptide is Asparagine--tRNA ligase (Thermosynechococcus vestitus (strain NIES-2133 / IAM M-273 / BP-1)).